A 55-amino-acid chain; its full sequence is Large ribosomal subunit protein bL33 (55 aa).

Belongs to the bacterial ribosomal protein bL33 family.

This chain is Large ribosomal subunit protein bL33, found in Ruegeria pomeroyi (strain ATCC 700808 / DSM 15171 / DSS-3) (Silicibacter pomeroyi).